A 156-amino-acid chain; its full sequence is Arginine repressor (156 aa).

It belongs to the ArgR family.

The protein resides in the cytoplasm. The protein operates within amino-acid biosynthesis; L-arginine biosynthesis [regulation]. Regulates arginine biosynthesis genes. This Vibrio cholerae serotype O1 (strain ATCC 39315 / El Tor Inaba N16961) protein is Arginine repressor.